Consider the following 272-residue polypeptide: MDIKHHTSTSKPKNKNKLLKMLPKAMSFGHRVPPFSPGRDLHHNNHHNYTAANKMFFSGPMVPLVPNAARVRRNKSDAVWDEPTSPKVSCIGQIKLGKSKCPTGKKNKAPSSLIPKISKTSTSSLTKEDEKGRLSKIKSIFSFSPASGRNTSRKSHPTAVSAADEHPVTVVSTAAVPSLGQMKKFASSRDALGDFDWAVEMKHEEESPADHHRGYYSDDDTRGAYLRYDDDEDEDDIIIPFSAPLGLKPKKEVNLWKRRTMDPPKPLHLQTI.

The tract at residues 101–130 (CPTGKKNKAPSSLIPKISKTSTSSLTKEDE) is disordered. The segment covering 110–125 (PSSLIPKISKTSTSSL) has biased composition (low complexity). A Phosphoserine modification is found at S142.

This is an uncharacterized protein from Arabidopsis thaliana (Mouse-ear cress).